Here is a 108-residue protein sequence, read N- to C-terminus: N(4)-acetylcytidine amidohydrolase (108 aa).

The ASCH domain maps to 5-102 (ITFFQRLERS…NDLFFISFRV (98 aa)). The Proton acceptor role is filled by lysine 20. Catalysis depends on threonine 23, which acts as the Nucleophile. Glutamate 73 acts as the Proton donor in catalysis.

It belongs to the N(4)-acetylcytidine amidohydrolase family.

It carries out the reaction N(4)-acetylcytidine + H2O = cytidine + acetate + H(+). The enzyme catalyses N(4)-acetyl-2'-deoxycytidine + H2O = 2'-deoxycytidine + acetate + H(+). The catalysed reaction is N(4)-acetylcytosine + H2O = cytosine + acetate + H(+). Its function is as follows. Catalyzes the hydrolysis of N(4)-acetylcytidine (ac4C). The sequence is that of N(4)-acetylcytidine amidohydrolase from Moritella marina (Vibrio marinus).